Consider the following 719-residue polypeptide: Ferric reductase transmembrane component 4 (719 aa).

A signal peptide spans 1–18 (MLLVHIISFLLFFQLSAA). The Extracellular segment spans residues 19–156 (KAPPSKTSLI…YGYYYNHDIP (138 aa)). N-linked (GlcNAc...) asparagine glycosylation is found at Asn51, Asn80, Asn101, Asn113, Asn127, and Asn135. The helical transmembrane segment at 157–177 (YYFGGIICAYFVGVMLLAGLI) threads the bilayer. Over 178–228 (RFLNYTPIKKIMFQQKLVNYVRGYTTLPTLYEKHAEPFSYLKVITGYLPTR) the chain is Cytoplasmic. A helical transmembrane segment spans residues 229–249 (FETLVILGYLILHTIFMAYKY). The Extracellular segment spans residues 250–267 (QYDPYHIIFAAHRAEVAH). Residues 268–288 (FVAYRSGILSFAHLPLIVLFA) form a helical membrane-spanning segment. One can recognise a Ferric oxidoreductase domain in the interval 273–407 (SGILSFAHLP…SGIEWIYAAI (135 aa)). Over 289–304 (GRNNFLQLISGLKHTS) the chain is Cytoplasmic. Residues 305-325 (FIVFHKWLGRMMFLDAIIHAA) traverse the membrane as a helical segment. Residues His309 and His323 each coordinate heme. The Extracellular portion of the chain corresponds to 326–346 (GFTNYYLYYKKWNTVRLRVYW). The helical transmembrane segment at 347 to 367 (KFGIATTCLAGMLIFFSIAAF) threads the bilayer. Topologically, residues 368-373 (RRHYYE) are cytoplasmic. The chain crosses the membrane as a helical span at residues 374 to 394 (TFMALHIVFAALFLYTCWEHV). 2 residues coordinate heme: His379 and His393. Thr395 is a topological domain (extracellular). A helical membrane pass occupies residues 396-416 (NFSGIEWIYAAIAIWGVDRIV). The FAD-binding FR-type domain maps to 408-527 (AIWGVDRIVR…EGPYGSKSTA (120 aa)). Over 417-719 (RITRIALLGF…IEYLEEYQAW (303 aa)) the chain is Cytoplasmic. 472 to 478 (HPFTVMD) contributes to the FAD binding site. NADP(+) is bound at residue 519 to 522 (GPYG). Polar residues-rich tracts occupy residues 606-618 (EKISSNEVKNGET) and 625-643 (SSLSNSEKAPSESENTELP). The interval 606–643 (EKISSNEVKNGETTAEKAPSSLSNSEKAPSESENTELP) is disordered. NADP(+) is bound at residue 685–686 (CG).

The protein belongs to the ferric reductase (FRE) family. The cofactor is FAD.

Its subcellular location is the cell membrane. The catalysed reaction is 2 a Fe(II)-siderophore + NADP(+) + H(+) = 2 a Fe(III)-siderophore + NADPH. Its function is as follows. Siderophore-iron reductase responsible for reducing extracellular iron prior to import. Catalyzes the reductive uptake of Fe(3+) bound to dihydroxamate rhodotorulic acid. Fe(3+) is reduced to Fe(2+), which then dissociates from the siderophore and can be imported by the high-affinity Fe(2+) transport complex in the plasma membrane. The sequence is that of Ferric reductase transmembrane component 4 (FRE4) from Saccharomyces cerevisiae (strain ATCC 204508 / S288c) (Baker's yeast).